A 317-amino-acid chain; its full sequence is 2,3-dihydroxyphenylpropionate/2,3-dihydroxicinnamic acid 1,2-dioxygenase 2 (317 aa).

Histidine 115 functions as the Proton donor in the catalytic mechanism. Histidine 179 (proton acceptor) is an active-site residue.

The protein belongs to the LigB/MhpB extradiol dioxygenase family. As to quaternary structure, homotetramer. Fe(2+) is required as a cofactor.

It catalyses the reaction 3-(2,3-dihydroxyphenyl)propanoate + O2 = (2Z,4E)-2-hydroxy-6-oxonona-2,4-dienedioate + H(+). The enzyme catalyses (2E)-3-(2,3-dihydroxyphenyl)prop-2-enoate + O2 = (2Z,4E,7E)-2-hydroxy-6-oxonona-2,4,7-trienedioate + H(+). It functions in the pathway aromatic compound metabolism; 3-phenylpropanoate degradation. In terms of biological role, catalyzes the non-heme iron(II)-dependent oxidative cleavage of 2,3-dihydroxyphenylpropionic acid and 2,3-dihydroxicinnamic acid into 2-hydroxy-6-ketononadienedioate and 2-hydroxy-6-ketononatrienedioate, respectively. This Dechloromonas aromatica (strain RCB) protein is 2,3-dihydroxyphenylpropionate/2,3-dihydroxicinnamic acid 1,2-dioxygenase 2.